Here is a 506-residue protein sequence, read N- to C-terminus: AMP phosphorylase (506 aa).

Residues Gly167, 193–198, and Thr202 each bind AMP; that span reads SRAITG. The active-site Proton donor is Asp255. AMP is bound by residues Ser263 and Lys287.

Belongs to the thymidine/pyrimidine-nucleoside phosphorylase family. Type 2 subfamily.

It carries out the reaction AMP + phosphate = alpha-D-ribose 1,5-bisphosphate + adenine. The catalysed reaction is CMP + phosphate = cytosine + alpha-D-ribose 1,5-bisphosphate. It catalyses the reaction UMP + phosphate = alpha-D-ribose 1,5-bisphosphate + uracil. Functionally, catalyzes the conversion of AMP and phosphate to adenine and ribose 1,5-bisphosphate (R15P). Exhibits phosphorylase activity toward CMP and UMP in addition to AMP. Functions in an archaeal AMP degradation pathway, together with R15P isomerase and RubisCO. In Methanosarcina acetivorans (strain ATCC 35395 / DSM 2834 / JCM 12185 / C2A), this protein is AMP phosphorylase.